The sequence spans 517 residues: FERM domain-containing protein 5 (517 aa).

One can recognise an FERM domain in the interval 17–298 (YSCTVRLLDD…ENQAFYKLEK (282 aa)). Residues 308–353 (SNLFFKGSRFRYSGRVAKEVMESSAKIKREPPEIHRAGMVPSRSCP) are interaction with ROCK1. The disordered stretch occupies residues 344–367 (AGMVPSRSCPSITHGPRLSSVPRT). Residue Ser-375 is modified to Phosphoserine. Disordered regions lie at residues 385 to 408 (DSAHSTPVRSSSHGDTFLPHVRSS) and 485 to 517 (GHGGSEQEQRVHLKGPQLQQQQWKGWGKSVPLD). Positions 388–398 (HSTPVRSSSHG) are enriched in polar residues. The segment covering 498–517 (KGPQLQQQQWKGWGKSVPLD) has biased composition (low complexity).

Interacts with CTNND1, ITGB5 (via cytoplasmic domain) and ROCK1.

It localises to the cell junction. Its subcellular location is the adherens junction. Its function is as follows. May be involved in regulation of cell migration. May regulate cell-matrix interactions via its interaction with ITGB5 and modifying ITGB5 cytoplasmic tail interactions such as with FERMT2 and TLN1. May regulate ROCK1 kinase activity possibly involved in regulation of actin stress fiber formation. This is FERM domain-containing protein 5 (Frmd5) from Mus musculus (Mouse).